Reading from the N-terminus, the 200-residue chain is Anthranilate synthase component 2 (200 aa).

Positions 3–196 (NILLLDNIDS…IHWASLKYIT (194 aa)) constitute a Glutamine amidotransferase type-1 domain. L-glutamine is bound at residue 57-59 (GPS). Cysteine 84 acts as the Nucleophile; for GATase activity in catalysis. Residues glutamine 88 and 134 to 135 (SL) contribute to the L-glutamine site. Residues histidine 170 and glutamate 172 each act as for GATase activity in the active site.

Heterotetramer consisting of two non-identical subunits: a beta subunit (TrpG) and a large alpha subunit (TrpE).

It catalyses the reaction chorismate + L-glutamine = anthranilate + pyruvate + L-glutamate + H(+). Its pathway is amino-acid biosynthesis; L-tryptophan biosynthesis; L-tryptophan from chorismate: step 1/5. Functionally, part of a heterotetrameric complex that catalyzes the two-step biosynthesis of anthranilate, an intermediate in the biosynthesis of L-tryptophan. In the first step, the glutamine-binding beta subunit (TrpG) of anthranilate synthase (AS) provides the glutamine amidotransferase activity which generates ammonia as a substrate that, along with chorismate, is used in the second step, catalyzed by the large alpha subunit of AS (TrpE) to produce anthranilate. In the absence of TrpG, TrpE can synthesize anthranilate directly from chorismate and high concentrations of ammonia. This Buchnera aphidicola subsp. Acyrthosiphon pisum (strain APS) (Acyrthosiphon pisum symbiotic bacterium) protein is Anthranilate synthase component 2 (trpG).